Consider the following 477-residue polypeptide: TNF receptor-associated factor family protein DDB_G0278133 (477 aa).

The RING-type; degenerate zinc finger occupies 45–88 (CDICTLELFIESEPKALQCKEGHLACRRCWERYLSTNKQCMTCK). TRAF-type zinc fingers lie at residues 160-211 (NHYK…SSLS) and 212-267 (DHHK…SKMQ). A coiled-coil region spans residues 271–326 (LEHSVTKLMNQNEIIKKDNQNLDQEKKIEEIKLKLNNLLNNYIQLKNEIAVLKQNS). The 133-residue stretch at 331 to 463 (VYSNKWIIPE…FLNEKGELEI (133 aa)) folds into the MATH domain.

This sequence belongs to the TNF receptor-associated factor family. A subfamily.

The protein resides in the cytoplasm. Its function is as follows. Probable adapter protein and signal transducer that links members of the tumor necrosis factor receptor family to different signaling pathways by association with the receptor cytoplasmic domain and kinases. The polypeptide is TNF receptor-associated factor family protein DDB_G0278133 (Dictyostelium discoideum (Social amoeba)).